The following is a 258-amino-acid chain: Ribosomal RNA small subunit methyltransferase J (258 aa).

Residues 111 to 112, 127 to 128, and D179 each bind S-adenosyl-L-methionine; these read RD and ER.

It belongs to the methyltransferase superfamily. RsmJ family.

The protein localises to the cytoplasm. It catalyses the reaction guanosine(1516) in 16S rRNA + S-adenosyl-L-methionine = N(2)-methylguanosine(1516) in 16S rRNA + S-adenosyl-L-homocysteine + H(+). In terms of biological role, specifically methylates the guanosine in position 1516 of 16S rRNA. The polypeptide is Ribosomal RNA small subunit methyltransferase J (Alteromonas mediterranea (strain DSM 17117 / CIP 110805 / LMG 28347 / Deep ecotype)).